Consider the following 655-residue polypeptide: uncharacterized protein (655 aa).

Positions 245–469 (PGVIAQALFT…NLKVIVNLGY (225 aa)) constitute a PE-PPE domain.

The protein belongs to the mycobacterial PPE family.

This is an uncharacterized protein from Mycobacterium tuberculosis (strain ATCC 25618 / H37Rv).